A 147-amino-acid chain; its full sequence is Riboflavin kinase (147 aa).

15–20 (GLGEGR) is a binding site for CDP. Mg(2+)-binding residues include Thr44 and Asn46. FMN contacts are provided by Thr97 and Glu104. 109-112 (TELR) is a binding site for CDP.

It belongs to the archaeal riboflavin kinase family. The cofactor is Mg(2+).

It catalyses the reaction riboflavin + CTP = CDP + FMN + H(+). The protein operates within cofactor biosynthesis; FMN biosynthesis; FMN from riboflavin (CTP route): step 1/1. Its function is as follows. Catalyzes the CTP-dependent phosphorylation of riboflavin (vitamin B2) to form flavin mononucleotide (FMN). The polypeptide is Riboflavin kinase (Methanopyrus kandleri (strain AV19 / DSM 6324 / JCM 9639 / NBRC 100938)).